Consider the following 141-residue polypeptide: Large ribosomal subunit protein uL16 (141 aa).

The protein belongs to the universal ribosomal protein uL16 family. Part of the 50S ribosomal subunit.

Its function is as follows. Binds 23S rRNA and is also seen to make contacts with the A and possibly P site tRNAs. The chain is Large ribosomal subunit protein uL16 from Campylobacter hominis (strain ATCC BAA-381 / DSM 21671 / CCUG 45161 / LMG 19568 / NCTC 13146 / CH001A).